A 154-amino-acid chain; its full sequence is MDARMFGLETPRVAALHHLLDVPDGDKAGGGATRTYVRDARAMAATPADVKELAGAYAFVVDMPGLSTGDIRVQVEDERVLVISGERRREEREDAKYLRMERRMGKFMRKFVLPDNADVDKVAAVCRDGVLTVTVEKLPPPEPKKPKTIEIKVA.

The 116-residue stretch at 39 to 154 (DARAMAATPA…KPKTIEIKVA (116 aa)) folds into the sHSP domain.

It belongs to the small heat shock protein (HSP20) family.

Its subcellular location is the cytoplasm. The sequence is that of 17.0 kDa class II heat shock protein (HSP18) from Zea mays (Maize).